Consider the following 150-residue polypeptide: Protein SprT-like (150 aa).

The SprT-like domain occupies 11–149 (ELVDKLSLTY…CGKCRGSLKE (139 aa)). Zn(2+) is bound at residue H70. E71 is an active-site residue. H74 is a Zn(2+) binding site.

Belongs to the SprT family. Zn(2+) is required as a cofactor.

The protein localises to the cytoplasm. The chain is Protein SprT-like from Oceanobacillus iheyensis (strain DSM 14371 / CIP 107618 / JCM 11309 / KCTC 3954 / HTE831).